Here is a 425-residue protein sequence, read N- to C-terminus: Peroxisomal membrane protein PEX14 (425 aa).

2 disordered regions span residues 49 to 89 and 247 to 425; these read RSQG…YRNA and DEPI…AAQS. Residues 56-76 are compositionally biased toward low complexity; the sequence is SSSVASQVSSYSPSASQSSVA. The SH3-binding motif lies at 89-97; the sequence is APPLPERDW. A compositionally biased stretch (polar residues) spans 256–297; it reads PSLTTGANSLTSESSGRSSIPHSQSVPIRTQLTTPPSDSDTS. Basic and acidic residues-rich tracts occupy residues 315–324 and 333–366; these read DILRKEKNRT and LGKD…PEED.

This sequence belongs to the peroxin-14 family. As to quaternary structure, interacts with PEX13 (via SH3 domain); forming the PEX13-PEX14 docking complex. Interacts with PEX5 (via WxxxF/Y motifs). Interacts with PEX20 (via WxxxF/Y motifs). Interacts with PEX3, PEX7, PEX8 and PEX17. Phosphorylated on serine or threonine residues.

It is found in the peroxisome membrane. In terms of biological role, component of the PEX13-PEX14 docking complex, a translocon channel that specifically mediates the import of peroxisomal cargo proteins bound to PEX5 or PEX20 receptors. The PEX13-PEX14 docking complex forms a large import pore which can be opened to a diameter of about 9 nm. Mechanistically, PEX5 (or PEX20) receptor along with cargo proteins associates with the PEX14 subunit of the PEX13-PEX14 docking complex in the cytosol, leading to the insertion of the receptor into the organelle membrane with the concomitant translocation of the cargo into the peroxisome matrix. In Komagataella pastoris (Yeast), this protein is Peroxisomal membrane protein PEX14.